Consider the following 143-residue polypeptide: Ribosome-binding factor A (143 aa).

Positions 123 to 143 (DNSLQENYKDSDKETKVEKLR) are disordered.

This sequence belongs to the RbfA family. As to quaternary structure, monomer. Binds 30S ribosomal subunits, but not 50S ribosomal subunits or 70S ribosomes.

The protein localises to the cytoplasm. Its function is as follows. One of several proteins that assist in the late maturation steps of the functional core of the 30S ribosomal subunit. Associates with free 30S ribosomal subunits (but not with 30S subunits that are part of 70S ribosomes or polysomes). Required for efficient processing of 16S rRNA. May interact with the 5'-terminal helix region of 16S rRNA. The protein is Ribosome-binding factor A of Francisella philomiragia subsp. philomiragia (strain ATCC 25017 / CCUG 19701 / FSC 153 / O#319-036).